A 229-amino-acid polypeptide reads, in one-letter code: MAKKKAFTPLLYLVSIVFLPWWISLLFQKSLESWVTNWWNTRQSETFLNDIEEKSILEKFIELEELLFLEEMIKEYSETHLQNLRIGIHKETIQLIKIQNEGRIHTILHFSTNIICFIILSGYSILGNKELVILNSWAQEFLYNLSDTIKAFSLLLLTDLCIGFHSPHGWELMIGFVYKDFGFVHNDQIISGLVSTFPVILDTILKYWIFRYLNRVSPSLVVIYHSMND.

Helical transmembrane passes span F7–F27, I107–G127, and I189–I209.

It belongs to the CemA family.

The protein localises to the plastid. It localises to the chloroplast inner membrane. It catalyses the reaction K(+)(in) + H(+)(out) = K(+)(out) + H(+)(in). Functionally, contributes to K(+)/H(+) antiport activity by supporting proton efflux to control proton extrusion and homeostasis in chloroplasts in a light-dependent manner to modulate photosynthesis. Prevents excessive induction of non-photochemical quenching (NPQ) under continuous-light conditions. Indirectly promotes efficient inorganic carbon uptake into chloroplasts. This chain is Potassium/proton antiporter CemA, found in Helianthus annuus (Common sunflower).